The following is a 309-amino-acid chain: Malate dehydrogenase (309 aa).

Residues 9–14 (GAGFVG) and Asp-33 contribute to the NAD(+) site. 2 residues coordinate substrate: Arg-82 and Arg-88. NAD(+) is bound by residues Asn-95 and 118–120 (VNN). Positions 120 and 151 each coordinate substrate. His-175 serves as the catalytic Proton acceptor.

It belongs to the LDH/MDH superfamily. MDH type 3 family. As to quaternary structure, homotetramer (active enzyme); homodimer and homotrimer at temperatures lower than 55 degrees Celsius (inactive forms).

The enzyme catalyses (S)-malate + NAD(+) = oxaloacetate + NADH + H(+). Its function is as follows. Catalyzes the reversible oxidation of malate to oxaloacetate. The protein is Malate dehydrogenase of Chloroflexus aurantiacus (strain ATCC 29366 / DSM 635 / J-10-fl).